A 649-amino-acid chain; its full sequence is ABC transporter G family member 5 (649 aa).

The region spanning 42–284 (VKTEEESLKL…LRSNGLHPPL (243 aa)) is the ABC transporter domain. Residue 80 to 87 (GPSGAGKS) participates in ATP binding. Positions 308–336 (SRRAAHVLTPQTTLQEKRSEDSQGESKSG) are disordered. The ABC transmembrane type-2 domain maps to 371–581 (EETMILTHRF…PFEGFLINEF (211 aa)). 6 helical membrane passes run 390 to 410 (LFACRTVQMLGSGIVLGLIFH), 425 to 445 (LFAFILTFLLTSTIEALPIFL), 474 to 494 (LPFLLILAILFSTPVYWLVGL), 506 to 526 (LLIWLILYTANSVVVCFSALV), 529 to 549 (FIVGNSVISGVMGSFFLFSGY), and 617 to 637 (VVIMLCFVLLYRFISYVILRC).

Belongs to the ABC transporter superfamily. ABCG family. Eye pigment precursor importer (TC 3.A.1.204) subfamily.

Its subcellular location is the membrane. The chain is ABC transporter G family member 5 (ABCG5) from Arabidopsis thaliana (Mouse-ear cress).